The sequence spans 433 residues: Enolase (433 aa).

Q167 contacts (2R)-2-phosphoglycerate. The Proton donor role is filled by E209. Mg(2+) is bound by residues D246, E291, and D318. Residues K343, R372, S373, and K394 each contribute to the (2R)-2-phosphoglycerate site. K343 functions as the Proton acceptor in the catalytic mechanism.

Belongs to the enolase family. Component of the RNA degradosome, a multiprotein complex involved in RNA processing and mRNA degradation. Mg(2+) is required as a cofactor.

It is found in the cytoplasm. The protein resides in the secreted. The protein localises to the cell surface. The enzyme catalyses (2R)-2-phosphoglycerate = phosphoenolpyruvate + H2O. Its pathway is carbohydrate degradation; glycolysis; pyruvate from D-glyceraldehyde 3-phosphate: step 4/5. Catalyzes the reversible conversion of 2-phosphoglycerate (2-PG) into phosphoenolpyruvate (PEP). It is essential for the degradation of carbohydrates via glycolysis. The sequence is that of Enolase from Vibrio vulnificus (strain YJ016).